The sequence spans 595 residues: Elongation factor 4 (595 aa).

A tr-type G domain is found at 2–184 (ETIRNFSIIA…TITHNIPYPK (183 aa)). Residues 14-19 (DHGKST) and 131-134 (NKID) contribute to the GTP site.

The protein belongs to the TRAFAC class translation factor GTPase superfamily. Classic translation factor GTPase family. LepA subfamily.

The protein localises to the cell membrane. The catalysed reaction is GTP + H2O = GDP + phosphate + H(+). In terms of biological role, required for accurate and efficient protein synthesis under certain stress conditions. May act as a fidelity factor of the translation reaction, by catalyzing a one-codon backward translocation of tRNAs on improperly translocated ribosomes. Back-translocation proceeds from a post-translocation (POST) complex to a pre-translocation (PRE) complex, thus giving elongation factor G a second chance to translocate the tRNAs correctly. Binds to ribosomes in a GTP-dependent manner. This is Elongation factor 4 from Buchnera aphidicola subsp. Baizongia pistaciae (strain Bp).